The following is a 603-amino-acid chain: NADH-ubiquinone oxidoreductase chain 5 (603 aa).

A run of 14 helical transmembrane segments spans residues 4–24 (YTSIMLMTLASLALPIFATLV), 36–56 (VKTTMMYAFITSLIPTTLYIF), 87–107 (MMFIPIALFITWSIMEFSLWY), 122–142 (LIFLITMLILITANNLFQLFI), 171–191 (AVLYNRIGDIGLILAMVWFLL), 211–233 (LPLMGLLLAAVGKSAQFGLHPWL), 241–261 (TPVSALLHSSTMVVAGVFLLI), 272–292 (LTQNLTLCLGAITTLFMAMCA), 301–320 (IVAFSTSSQLGLMMITIGIN), 325–347 (AFLHICTHAFFKAMLFICSGSII), 370–390 (STSLIIGNLALTGIPFLTGFY), 406–422 (AWALSITLIATSLTSAY), 488–508 (LLALYMTALGFIITLDLTLMT), and 583–603 (MIKLYFLSFLIPLALALLLMV).

This sequence belongs to the complex I subunit 5 family. As to quaternary structure, core subunit of respiratory chain NADH dehydrogenase (Complex I) which is composed of 45 different subunits.

It localises to the mitochondrion inner membrane. It catalyses the reaction a ubiquinone + NADH + 5 H(+)(in) = a ubiquinol + NAD(+) + 4 H(+)(out). Core subunit of the mitochondrial membrane respiratory chain NADH dehydrogenase (Complex I) which catalyzes electron transfer from NADH through the respiratory chain, using ubiquinone as an electron acceptor. Essential for the catalytic activity and assembly of complex I. The sequence is that of NADH-ubiquinone oxidoreductase chain 5 (MT-ND5) from Papio hamadryas (Hamadryas baboon).